Consider the following 278-residue polypeptide: S-formylglutathione hydrolase YeiG (278 aa).

Residues serine 145, aspartate 223, and histidine 256 each act as charge relay system in the active site.

It belongs to the esterase D family.

It carries out the reaction S-formylglutathione + H2O = formate + glutathione + H(+). Serine hydrolase involved in the detoxification of formaldehyde. Hydrolyzes S-formylglutathione to glutathione and formate. In Shigella boydii serotype 4 (strain Sb227), this protein is S-formylglutathione hydrolase YeiG (yeiG).